The chain runs to 115 residues: Urease subunit beta (115 aa).

It belongs to the urease beta subunit family. As to quaternary structure, heterotrimer of UreA (gamma), UreB (beta) and UreC (alpha) subunits. Three heterotrimers associate to form the active enzyme.

It localises to the cytoplasm. It catalyses the reaction urea + 2 H2O + H(+) = hydrogencarbonate + 2 NH4(+). It participates in nitrogen metabolism; urea degradation; CO(2) and NH(3) from urea (urease route): step 1/1. This chain is Urease subunit beta, found in Arthrobacter sp. (strain FB24).